The chain runs to 405 residues: L-rhamnonate dehydratase (405 aa).

Substrate contacts are provided by His-33 and Arg-59. 3 residues coordinate Mg(2+): Asp-226, Glu-252, and Glu-280. His-329 functions as the Proton acceptor in the catalytic mechanism. Residue Glu-349 coordinates substrate.

The protein belongs to the mandelate racemase/muconate lactonizing enzyme family. RhamD subfamily. In terms of assembly, homooctamer; tetramer of dimers. Mg(2+) serves as cofactor.

It catalyses the reaction L-rhamnonate = 2-dehydro-3-deoxy-L-rhamnonate + H2O. Its function is as follows. Catalyzes the dehydration of L-rhamnonate to 2-keto-3-deoxy-L-rhamnonate (KDR). The protein is L-rhamnonate dehydratase of Escherichia coli O6:K15:H31 (strain 536 / UPEC).